We begin with the raw amino-acid sequence, 707 residues long: MSQRRLFVTTALPYANGNFHIGHIMEYIQADIWVRYQRMQGNAVNFVGADDAHGAPIMIAAEKAGKTPQQFVADIASGRKPYLDGFHISFDNWSSTDSPENHELARQIYRDLRDNPQGSLIETKTIEQFFDPEKNMFLPDRFIKGECPKCHAKDQYGDNCEVCGAVYAPTDLINPYSALSGVTPVLKSSEHFFFKLSDARCVEFLESWTQDGKLQPEVANKVKEWFSVRENADGTQSEGLGDWDISRDAPYFGIEIPDAPGKYFYVWLDAPVGYLASLKNLLDRRGESYDDYMADPKLEQYHFIGKDIVTFHTLFWPAMLHFSGRKTPDNIFVHGFLTVNNGEKMSKSRGTGLDPLKYLSLGMNPEWLRYYLAAKLNARNEDIDFNADDFMARVNSDLVGKFINIASRAAGFLTKRFDGKIGDASGDFPNPDGQGYPSLAISEIGACAAEISELYEQRELGKAMRKIMEIADGLNSDWDAAQPWKLAKSEEPQQLARLQRICSNTIEGFRLLTLYLKPVLPALAIEVESFLKIDPLNFSDATKALPKGHPIGDYKHLMQRVDVKQLDALFEPPAQDTPAQAAIETVAPGGEDIAPAITIDDFAKVDLRIAKIVNCEAVEGSTKLLRLTLDAGEGRMRNVFSGIASSYRPADLIGKHTVLVANLAPRKMKFGISEGMVLAASHADEKSNPGIYVLEPLPGATPGMRIH.

A 'HIGH' region motif is present at residues 13-23; sequence PYANGNFHIGH. 4 residues coordinate Zn(2+): Cys147, Cys150, Cys160, and Cys163. The short motif at 344-348 is the 'KMSKS' region element; sequence KMSKS. Residue Lys347 coordinates ATP. Residues 601–707 form the tRNA-binding domain; sequence DFAKVDLRIA…PGATPGMRIH (107 aa).

This sequence belongs to the class-I aminoacyl-tRNA synthetase family. MetG type 1 subfamily. In terms of assembly, homodimer. Zn(2+) serves as cofactor.

It is found in the cytoplasm. It carries out the reaction tRNA(Met) + L-methionine + ATP = L-methionyl-tRNA(Met) + AMP + diphosphate. In terms of biological role, is required not only for elongation of protein synthesis but also for the initiation of all mRNA translation through initiator tRNA(fMet) aminoacylation. This Polaromonas naphthalenivorans (strain CJ2) protein is Methionine--tRNA ligase.